The chain runs to 109 residues: DNA-directed RNA polymerase subunit I (109 aa).

It carries out the reaction RNA(n) + a ribonucleoside 5'-triphosphate = RNA(n+1) + diphosphate. In terms of biological role, DNA-dependent RNA polymerase catalyzes the transcription of DNA into RNA using the four ribonucleoside triphosphates as substrates. In Methanocaldococcus jannaschii (strain ATCC 43067 / DSM 2661 / JAL-1 / JCM 10045 / NBRC 100440) (Methanococcus jannaschii), this protein is DNA-directed RNA polymerase subunit I (rpoI).